The primary structure comprises 538 residues: Putative outer membrane porin BglH (538 aa).

Positions 1–25 (MFRRNLITSAILLMAPLAFSAQSLA) are cleaved as a signal peptide. The tract at residues 52–82 (KDEEKKKYTPATVNRSVSTNDQGYAANPFPT) is disordered. The segment covering 62–73 (ATVNRSVSTNDQ) has biased composition (polar residues).

It belongs to the porin LamB (TC 1.B.3) family.

The protein resides in the cell outer membrane. In terms of biological role, may be a sugar porin with a broad carbohydrate specificity. The protein is Putative outer membrane porin BglH (bglH) of Escherichia coli O139:H28 (strain E24377A / ETEC).